Consider the following 107-residue polypeptide: Nucleoid-associated protein RF_1365 (107 aa).

Belongs to the YbaB/EbfC family. As to quaternary structure, homodimer.

Its subcellular location is the cytoplasm. It localises to the nucleoid. Its function is as follows. Binds to DNA and alters its conformation. May be involved in regulation of gene expression, nucleoid organization and DNA protection. In Rickettsia felis (strain ATCC VR-1525 / URRWXCal2) (Rickettsia azadi), this protein is Nucleoid-associated protein RF_1365.